We begin with the raw amino-acid sequence, 388 residues long: S-adenosylmethionine synthase (388 aa).

Histidine 16 contacts ATP. Aspartate 18 serves as a coordination point for Mg(2+). Glutamate 44 contacts K(+). Positions 57 and 100 each coordinate L-methionine. The interval 100–110 is flexible loop; it reads QSPDIAQGVNE. ATP contacts are provided by residues 167–169, 233–234, aspartate 242, 248–249, and lysine 269; these read DGK, RF, and RK. Aspartate 242 contributes to the L-methionine binding site. Lysine 273 provides a ligand contact to L-methionine.

The protein belongs to the AdoMet synthase family. In terms of assembly, homotetramer; dimer of dimers. Mg(2+) is required as a cofactor. The cofactor is K(+).

The protein localises to the cytoplasm. The catalysed reaction is L-methionine + ATP + H2O = S-adenosyl-L-methionine + phosphate + diphosphate. It participates in amino-acid biosynthesis; S-adenosyl-L-methionine biosynthesis; S-adenosyl-L-methionine from L-methionine: step 1/1. Catalyzes the formation of S-adenosylmethionine (AdoMet) from methionine and ATP. The overall synthetic reaction is composed of two sequential steps, AdoMet formation and the subsequent tripolyphosphate hydrolysis which occurs prior to release of AdoMet from the enzyme. This chain is S-adenosylmethionine synthase, found in Desulfosudis oleivorans (strain DSM 6200 / JCM 39069 / Hxd3) (Desulfococcus oleovorans).